The following is a 143-amino-acid chain: Large ribosomal subunit protein uL11 (143 aa).

The protein belongs to the universal ribosomal protein uL11 family. Part of the ribosomal stalk of the 50S ribosomal subunit. Interacts with L10 and the large rRNA to form the base of the stalk. L10 forms an elongated spine to which L12 dimers bind in a sequential fashion forming a multimeric L10(L12)X complex. In terms of processing, one or more lysine residues are methylated.

Its function is as follows. Forms part of the ribosomal stalk which helps the ribosome interact with GTP-bound translation factors. This Acidovorax ebreus (strain TPSY) (Diaphorobacter sp. (strain TPSY)) protein is Large ribosomal subunit protein uL11.